A 285-amino-acid polypeptide reads, in one-letter code: Small ribosomal subunit protein uS2 (285 aa).

The segment at 229–285 is disordered; the sequence is RHNGKSNAAEEPMAEWERELLEQHEEQKSQDAAPAEQSAPAAEAPAETEQKDAPAAE. Over residues 243–257 the composition is skewed to basic and acidic residues; it reads EWERELLEQHEEQKS. The segment covering 260–275 has biased composition (low complexity); it reads AAPAEQSAPAAEAPAE. The segment covering 276–285 has biased composition (basic and acidic residues); that stretch reads TEQKDAPAAE.

It belongs to the universal ribosomal protein uS2 family.

The sequence is that of Small ribosomal subunit protein uS2 from Kocuria rhizophila (strain ATCC 9341 / DSM 348 / NBRC 103217 / DC2201).